Consider the following 388-residue polypeptide: Phosphoglycerate kinase (388 aa).

Substrate-binding positions include 21–23, Arg-36, 59–62, Arg-114, and Arg-147; these read DLN and HLGR. ATP-binding positions include Lys-198, Glu-315, and 341-344; that span reads GGDT.

This sequence belongs to the phosphoglycerate kinase family. As to quaternary structure, monomer.

Its subcellular location is the cytoplasm. The catalysed reaction is (2R)-3-phosphoglycerate + ATP = (2R)-3-phospho-glyceroyl phosphate + ADP. It participates in carbohydrate degradation; glycolysis; pyruvate from D-glyceraldehyde 3-phosphate: step 2/5. The chain is Phosphoglycerate kinase from Buchnera aphidicola subsp. Schizaphis graminum (strain Sg).